The following is a 31-amino-acid chain: MPILTSYFGFLLAASTITPALFIGLNKIRLI.

A helical membrane pass occupies residues 4–26 (LTSYFGFLLAASTITPALFIGLN).

This sequence belongs to the PetL family. As to quaternary structure, the 4 large subunits of the cytochrome b6-f complex are cytochrome b6, subunit IV (17 kDa polypeptide, PetD), cytochrome f and the Rieske protein, while the 4 small subunits are PetG, PetL, PetM and PetN. The complex functions as a dimer.

Its subcellular location is the plastid. It localises to the chloroplast thylakoid membrane. Its function is as follows. Component of the cytochrome b6-f complex, which mediates electron transfer between photosystem II (PSII) and photosystem I (PSI), cyclic electron flow around PSI, and state transitions. PetL is important for photoautotrophic growth as well as for electron transfer efficiency and stability of the cytochrome b6-f complex. This chain is Cytochrome b6-f complex subunit 6, found in Phalaenopsis aphrodite subsp. formosana (Moth orchid).